The primary structure comprises 206 residues: Ubiquitin-conjugating enzyme E2 S (206 aa).

The UBC core domain maps to 14-160; the sequence is QTIRQVMKEL…ARMMTEIHAQ (147 aa). Catalysis depends on cysteine 98, which acts as the Glycyl thioester intermediate. The tract at residues 165–191 is disordered; sequence GVSDAKDDDGPSNKKHAGLDKKLQDKK. The segment covering 168 to 191 has biased composition (basic and acidic residues); it reads DAKDDDGPSNKKHAGLDKKLQDKK.

The protein belongs to the ubiquitin-conjugating enzyme family.

The catalysed reaction is S-ubiquitinyl-[E1 ubiquitin-activating enzyme]-L-cysteine + [E2 ubiquitin-conjugating enzyme]-L-cysteine = [E1 ubiquitin-activating enzyme]-L-cysteine + S-ubiquitinyl-[E2 ubiquitin-conjugating enzyme]-L-cysteine.. Its pathway is protein modification; protein ubiquitination. In terms of biological role, catalyzes the covalent attachment of ubiquitin to other proteins. Acts as an essential factor of the anaphase promoting complex/cyclosome (APC/C), a cell cycle-regulated ubiquitin ligase that controls progression through mitosis. Acts by specifically elongating polyubiquitin chains initiated by the E2 enzyme vih/UbcH10 on APC/C substrates, enhancing the degradation of APC/C substrates by the proteasome and promoting mitotic exit. The chain is Ubiquitin-conjugating enzyme E2 S from Drosophila mojavensis (Fruit fly).